The chain runs to 492 residues: MDFWLYKQAQQNGHHIAITDGQESYTYQNLYCEASLLAKRLKAYQQSRVGLYIDNSIQSIILIHACWLANIEIAMINTRLTPNEMTNQMKSIDVQLIFCTLPLELRGFQIVSLDDIEFAGRDITTNSLLDNTMGIQYETSNETVVPKESPSNILNTSFNLDDIASIMFTSGTTGPQKAVPQTFRNHYASAIGCKESLGFDRDTNWLSVLPIYHISGLSVLLRAVIEGFTVRIVDKFNAEQILTMIKNERITHISLVPQTLNWLMQQGLHEPYNLQKILLGGAKLSATMIETALQYNLPIYNSFGMTETCSQFLTATPEMLHARPDTVGMPSANVDVKIKNPNKEGHGELMIKGANVMNVYLYPTDLTGTFENGYFNTGDIAEIDHEGYVMIYDRRKDLIISGGENIYPYQIETVAKQFPGISDAVCVGHPDDTWGQVPKLYFVSESDISKAQLIAYLSQHLAKYKVPKHFEKVDTLPYTSTGKLQRNKLYRG.

Belongs to the ATP-dependent AMP-binding enzyme family. MenE subfamily.

The enzyme catalyses 2-succinylbenzoate + ATP + CoA = 2-succinylbenzoyl-CoA + AMP + diphosphate. It participates in quinol/quinone metabolism; 1,4-dihydroxy-2-naphthoate biosynthesis; 1,4-dihydroxy-2-naphthoate from chorismate: step 5/7. Its pathway is quinol/quinone metabolism; menaquinone biosynthesis. In terms of biological role, converts 2-succinylbenzoate (OSB) to 2-succinylbenzoyl-CoA (OSB-CoA). The chain is 2-succinylbenzoate--CoA ligase from Staphylococcus aureus (strain USA300 / TCH1516).